A 182-amino-acid polypeptide reads, in one-letter code: HGPRTase-like protein 1 (182 aa).

It belongs to the purine/pyrimidine phosphoribosyltransferase family. Archaeal HPRT subfamily.

Functionally, may catalyze a purine salvage reaction, the substrate is unknown. This Haloarcula marismortui (strain ATCC 43049 / DSM 3752 / JCM 8966 / VKM B-1809) (Halobacterium marismortui) protein is HGPRTase-like protein 1.